The sequence spans 337 residues: UDP-N-acetylenolpyruvoylglucosamine reductase (337 aa).

Residues 17–186 form the FAD-binding PCMH-type domain; the sequence is IEAKAKQFIA…TSVIYKLTKR (170 aa). R162 is a catalytic residue. S237 (proton donor) is an active-site residue. Residue E333 is part of the active site.

It belongs to the MurB family. It depends on FAD as a cofactor.

It localises to the cytoplasm. It catalyses the reaction UDP-N-acetyl-alpha-D-muramate + NADP(+) = UDP-N-acetyl-3-O-(1-carboxyvinyl)-alpha-D-glucosamine + NADPH + H(+). It participates in cell wall biogenesis; peptidoglycan biosynthesis. In terms of biological role, cell wall formation. The protein is UDP-N-acetylenolpyruvoylglucosamine reductase of Flavobacterium johnsoniae (strain ATCC 17061 / DSM 2064 / JCM 8514 / BCRC 14874 / CCUG 350202 / NBRC 14942 / NCIMB 11054 / UW101) (Cytophaga johnsonae).